A 326-amino-acid chain; its full sequence is Isopenicillin N synthase (326 aa).

Residues Arg-84, Tyr-88, and Tyr-186 each contribute to the isopenicillin N site. N-[(5S)-5-amino-5-carboxypentanoyl]-L-cysteinyl-D-valine contacts are provided by Arg-84, Tyr-88, Tyr-186, His-209, and Asp-211. Residues 183-283 (LIRYPFLENY…RLSIPFFANL (101 aa)) form the Fe2OG dioxygenase domain. The Fe(2+) site is built by His-209, Asp-211, and His-265. Arg-274 contributes to the 2-oxoglutarate binding site. Ser-276 contacts isopenicillin N. Residue Ser-276 participates in N-[(5S)-5-amino-5-carboxypentanoyl]-L-cysteinyl-D-valine binding.

Belongs to the iron/ascorbate-dependent oxidoreductase family. Requires Fe cation as cofactor. L-ascorbate is required as a cofactor.

It carries out the reaction N-[(5S)-5-amino-5-carboxypentanoyl]-L-cysteinyl-D-valine + O2 = isopenicillin N + 2 H2O. It functions in the pathway antibiotic biosynthesis; penicillin G biosynthesis; penicillin G from L-alpha-aminoadipate and L-cysteine and L-valine: step 2/3. Removes, in the presence of oxygen, 4 hydrogen atoms from delta-L-(alpha-aminoadipyl)-L-cysteinyl-D-valine (ACV) to form the azetidinone and thiazolidine rings of isopenicillin. This is Isopenicillin N synthase (pcbC) from Lysobacter lactamgenus.